We begin with the raw amino-acid sequence, 35 residues long: Dolichyl-diphosphooligosaccharide--protein glycosyltransferase subunit 4B (35 aa).

At 1–8 (MFDDQDLG) the chain is on the lumenal side. The chain crosses the membrane as a helical span at residues 9 to 29 (FFANFLGIFIFIMVIAYHFVV). The Cytoplasmic portion of the chain corresponds to 30 to 35 (AEPKFE).

It belongs to the OST4 family. As to quaternary structure, component of the oligosaccharyltransferase (OST) complex.

The protein resides in the endoplasmic reticulum membrane. Functionally, subunit of the oligosaccharyl transferase (OST) complex that catalyzes the initial transfer of a defined glycan (Glc(3)Man(9)GlcNAc(2) in eukaryotes) from the lipid carrier dolichol-pyrophosphate to an asparagine residue within an Asn-X-Ser/Thr consensus motif in nascent polypeptide chains, the first step in protein N-glycosylation. N-glycosylation occurs cotranslationally and the complex associates with the Sec61 complex at the channel-forming translocon complex that mediates protein translocation across the endoplasmic reticulum (ER). All subunits are required for a maximal enzyme activity. The chain is Dolichyl-diphosphooligosaccharide--protein glycosyltransferase subunit 4B (OST4B) from Arabidopsis thaliana (Mouse-ear cress).